We begin with the raw amino-acid sequence, 128 residues long: Large ribosomal subunit protein bL17 (128 aa).

It belongs to the bacterial ribosomal protein bL17 family. As to quaternary structure, part of the 50S ribosomal subunit. Contacts protein L32.

The chain is Large ribosomal subunit protein bL17 from Streptococcus uberis (strain ATCC BAA-854 / 0140J).